Reading from the N-terminus, the 928-residue chain is DNA polymerase I (928 aa).

Residues 1 to 323 (MVQIPQNPLI…ADEAPEVTAT (323 aa)) form the 5'-3' exonuclease domain. The 194-residue stretch at 324-517 (VISYDNYVTI…LHLKMWPDLQ (194 aa)) folds into the 3'-5' exonuclease domain. The klenow fragment stretch occupies residues 324 to 928 (VISYDNYVTI…GSGENWDQAH (605 aa)). Residues 521-928 (GPLNVFENIE…GSGENWDQAH (408 aa)) are polymerase.

The protein belongs to the DNA polymerase type-A family. In terms of assembly, single-chain monomer with multiple functions.

It carries out the reaction DNA(n) + a 2'-deoxyribonucleoside 5'-triphosphate = DNA(n+1) + diphosphate. Functionally, in addition to polymerase activity, this DNA polymerase exhibits 3'-5' and 5'-3' exonuclease activity. It is able to utilize nicked circular duplex DNA as a template and can unwind the parental DNA strand from its template. Its function is as follows. Genetic interactions among priB, dam, lexA, nagC, polA, rdgB, rdgB, rep and uup link the PriA-PriB replication restart pathway to DNA double-strand break repair. The sequence is that of DNA polymerase I (polA) from Escherichia coli (strain K12).